Here is a 273-residue protein sequence, read N- to C-terminus: Ribonuclease Z (273 aa).

Zn(2+) contacts are provided by His61, His63, His146, Asp169, and His233.

The protein belongs to the RNase Z family. In terms of assembly, homodimer. It depends on Zn(2+) as a cofactor.

It catalyses the reaction Endonucleolytic cleavage of RNA, removing extra 3' nucleotides from tRNA precursor, generating 3' termini of tRNAs. A 3'-hydroxy group is left at the tRNA terminus and a 5'-phosphoryl group is left at the trailer molecule.. In terms of biological role, zinc phosphodiesterase, which displays some tRNA 3'-processing endonuclease activity. Probably involved in tRNA maturation, by removing a 3'-trailer from precursor tRNA. This chain is Ribonuclease Z, found in Mycobacterium tuberculosis (strain ATCC 25177 / H37Ra).